A 462-amino-acid polypeptide reads, in one-letter code: NAD(P) transhydrogenase subunit beta (462 aa).

The Periplasmic portion of the chain corresponds to 1–3 (MSG). The helical transmembrane segment at 4–24 (GLVTAAYIVAAILFIFSLAGL) threads the bilayer. At 25-45 (SKHETSRQGNNFGIAGMAIAL) the chain is on the cytoplasmic side. The helical transmembrane segment at 46–66 (IATIFGPDTGNVGWILLAMVI) threads the bilayer. Residues 67 to 82 (GGAIGIRLAKKVEMTE) are Periplasmic-facing. Residues 83–103 (MPELVAILHSFVGLAAVLVGF) traverse the membrane as a helical segment. Topologically, residues 104-115 (NSYLHHDAGMAP) are cytoplasmic. A helical transmembrane segment spans residues 116–136 (ILVNIHLTEVFLGIFIGAVTF). Over 137-164 (TGSVVAFGKLCGKISSKPLMLPNRHKMN) the chain is Periplasmic. A helical membrane pass occupies residues 165 to 185 (LAALVVSFLLLIVFVRTDSVG). Residues 186–188 (LQV) are Cytoplasmic-facing. A helical membrane pass occupies residues 189-209 (LALLIMTAIALVFGWHLVASI). Topologically, residues 210-215 (GGADMP) are periplasmic. The chain crosses the membrane as a helical span at residues 216–236 (VVVSMLNSYSGWAAAAAGFML). The Cytoplasmic segment spans residues 237 to 239 (SND). The chain crosses the membrane as a helical span at residues 240–260 (LLIVTGALVGSSGAILSYIMC). Over 261 to 308 (KAMNRSFISVIAGGFGTDGSSTGDDQEVGEHREITAEETAELLKNSHS) the chain is Periplasmic. A helical transmembrane segment spans residues 309–329 (VIITPGYGMAVAQAQYPVAEI). Over 330-462 (TEKLRARGIN…ASVDAILKAL (133 aa)) the chain is Cytoplasmic.

Belongs to the PNT beta subunit family. Heterodimer of an alpha and a beta chain.

The protein resides in the cell inner membrane. It catalyses the reaction NAD(+) + NADPH + H(+)(in) = NADH + NADP(+) + H(+)(out). The transhydrogenation between NADH and NADP is coupled to respiration and ATP hydrolysis and functions as a proton pump across the membrane. The chain is NAD(P) transhydrogenase subunit beta (pntB) from Escherichia coli O157:H7.